A 338-amino-acid chain; its full sequence is DNA-directed RNA polymerase subunit alpha (338 aa).

The alpha N-terminal domain (alpha-NTD) stretch occupies residues Met-1–Asn-226. An alpha C-terminal domain (alpha-CTD) region spans residues Leu-243–Asn-338.

The protein belongs to the RNA polymerase alpha chain family. In terms of assembly, homodimer. The RNAP catalytic core consists of 2 alpha, 1 beta, 1 beta' and 1 omega subunit. When a sigma factor is associated with the core the holoenzyme is formed, which can initiate transcription.

It catalyses the reaction RNA(n) + a ribonucleoside 5'-triphosphate = RNA(n+1) + diphosphate. DNA-dependent RNA polymerase catalyzes the transcription of DNA into RNA using the four ribonucleoside triphosphates as substrates. The protein is DNA-directed RNA polymerase subunit alpha of Beutenbergia cavernae (strain ATCC BAA-8 / DSM 12333 / CCUG 43141 / JCM 11478 / NBRC 16432 / NCIMB 13614 / HKI 0122).